The sequence spans 82 residues: UPF0248 protein Mevan_1298 (82 aa).

The protein belongs to the UPF0248 family.

This chain is UPF0248 protein Mevan_1298, found in Methanococcus vannielii (strain ATCC 35089 / DSM 1224 / JCM 13029 / OCM 148 / SB).